Reading from the N-terminus, the 216-residue chain is Thiopurine S-methyltransferase (216 aa).

S-adenosyl-L-methionine is bound by residues tryptophan 10, leucine 45, glutamate 66, and arginine 123.

It belongs to the class I-like SAM-binding methyltransferase superfamily. TPMT family.

It localises to the cytoplasm. It catalyses the reaction S-adenosyl-L-methionine + a thiopurine = S-adenosyl-L-homocysteine + a thiopurine S-methylether.. The protein is Thiopurine S-methyltransferase of Pseudomonas putida (strain ATCC 700007 / DSM 6899 / JCM 31910 / BCRC 17059 / LMG 24140 / F1).